The chain runs to 707 residues: Polyribonucleotide nucleotidyltransferase (707 aa).

Mg(2+) contacts are provided by Asp-486 and Asp-492. A KH domain is found at 553 to 612 (PRIHTIKINPEKIKDVIGKGGSVIRALTEETGTTIEIEDDGTVKIAATDGDKAKHAIRRI). The 69-residue stretch at 622–690 (GRIYQGKVTR…RQGRVRLSIK (69 aa)) folds into the S1 motif domain.

This sequence belongs to the polyribonucleotide nucleotidyltransferase family. Component of the RNA degradosome, which is a multiprotein complex involved in RNA processing and mRNA degradation. The cofactor is Mg(2+).

It is found in the cytoplasm. The enzyme catalyses RNA(n+1) + phosphate = RNA(n) + a ribonucleoside 5'-diphosphate. Its function is as follows. Involved in mRNA degradation. Catalyzes the phosphorolysis of single-stranded polyribonucleotides processively in the 3'- to 5'-direction. This Edwardsiella ictaluri (strain 93-146) protein is Polyribonucleotide nucleotidyltransferase.